We begin with the raw amino-acid sequence, 490 residues long: Thyroid hormone receptor alpha (490 aa).

Residues 1–32 (MEQKPSKVECGSDPEENSARSPDGKRKRKNGQ) are disordered. Residues 1–52 (MEQKPSKVECGSDPEENSARSPDGKRKRKNGQCSLKTSMSGYIPSYLDKDEQ) are modulating. Residues cysteine 53, cysteine 56, cysteine 70, cysteine 73, cysteine 91, cysteine 97, cysteine 107, and cysteine 110 each coordinate Zn(2+). NR C4-type zinc fingers lie at residues 53–73 (CVVCGDKATGYHYRCITCEGC) and 91–115 (CKYDSCCVIDKITRNQCQLCRFKKC). Residues 53–127 (CVVCGDKATG…VGMAMDLVLD (75 aa)) constitute a DNA-binding region (nuclear receptor). One can recognise an NR LBD domain in the interval 163 to 407 (EEWDLIHIAT…EGQQLLGMHV (245 aa)). Residues arginine 228 and serine 277 each contribute to the 3,3',5-triiodo-L-thyronine site. The segment at 457-490 (AVCGEDDSSEADSPSSSEEEPEVCEDLAGNAASP) is disordered.

This sequence belongs to the nuclear hormone receptor family. NR1 subfamily. In terms of assembly, binds DNA as a dimer; homodimer and heterodimer with RXRB. Interacts with NCOA3 and NCOA6 coactivators, leading to a strong increase of transcription of target genes. Probably interacts with SFPQ. Interacts with C1D. Interacts with AKAP13. Interacts with TP53INP2. Interacts with PER2. Isoform alpha-2 and isoform alpha-1 interact with TACC1, but the interaction with alpha-1 is weaker. The interaction with isoform alpha-1, but not alpha-2, is decreased in the presence of thyroid hormone T3.

Its subcellular location is the nucleus. It localises to the cytoplasm. Nuclear hormone receptor that can act as a repressor or activator of transcription. High affinity receptor for thyroid hormones, including triiodothyronine and thyroxine. Its function is as follows. Does not bind thyroid hormone and functions as a weak dominant negative inhibitor of thyroid hormone action. This Homo sapiens (Human) protein is Thyroid hormone receptor alpha (THRA).